The chain runs to 373 residues: Carnosine N-methyltransferase (373 aa).

S-adenosyl-L-methionine-binding residues include glutamine 110, arginine 113, glycine 154, glutamate 175, aspartate 242, phenylalanine 243, and cysteine 262. Residue aspartate 266 participates in carnosine binding. Position 274 (tyrosine 274) interacts with S-adenosyl-L-methionine. Positions 297 and 356 each coordinate carnosine.

It belongs to the carnosine N-methyltransferase family.

The protein localises to the cytoplasm. It is found in the nucleus. It carries out the reaction carnosine + S-adenosyl-L-methionine = anserine + S-adenosyl-L-homocysteine + H(+). In terms of biological role, N-methyltransferase that mediates the formation of anserine (beta-alanyl-N(Pi)-methyl-L-histidine) from carnosine. Also methylates other L-histidine-containing di- and tripeptides such as Gly-Gly-His, Gly-His and homocarnosine (GABA-His). This is Carnosine N-methyltransferase from Schizosaccharomyces pombe (strain 972 / ATCC 24843) (Fission yeast).